The following is a 432-amino-acid chain: Thiol-specific monooxygenase (432 aa).

Residues 13 to 17 (GGGPG) and 46 to 47 (VW) each bind FAD. Residue 65–66 (TN) coordinates NADP(+). Residue 117 to 118 (EV) participates in FAD binding. 199-202 (SGQD) contacts NADP(+).

This sequence belongs to the FMO family. Monomer. FAD is required as a cofactor.

Functionally, flavin-dependent oxidation of thiol-containing compounds. Probably required for the correct folding of disulfide-bonded proteins. The sequence is that of Thiol-specific monooxygenase (FMO1) from Saccharomyces cerevisiae (strain ATCC 204508 / S288c) (Baker's yeast).